A 299-amino-acid chain; its full sequence is Pectin lyase (299 aa).

The first 18 residues, Met1–Ala18, serve as a signal peptide directing secretion. Composition is skewed to low complexity over residues Arg82–Asp91 and Ser232–Thr246. 2 disordered regions span residues Arg82–Ser105 and Ser227–Thr246.

Belongs to the polysaccharide lyase 1 family.

Its subcellular location is the secreted. The catalysed reaction is Eliminative cleavage of (1-&gt;4)-alpha-D-galacturonan methyl ester to give oligosaccharides with 4-deoxy-6-O-methyl-alpha-D-galact-4-enuronosyl groups at their non-reducing ends.. This chain is Pectin lyase (PELA), found in Peyronellaea pinodes (Pea foot rot fungus).